A 354-amino-acid chain; its full sequence is Uroporphyrinogen decarboxylase (354 aa).

Residues 27-31 (RQAGR), D77, Y154, S209, and H327 each bind substrate.

The protein belongs to the uroporphyrinogen decarboxylase family. Homodimer.

The protein localises to the cytoplasm. It carries out the reaction uroporphyrinogen III + 4 H(+) = coproporphyrinogen III + 4 CO2. Its pathway is porphyrin-containing compound metabolism; protoporphyrin-IX biosynthesis; coproporphyrinogen-III from 5-aminolevulinate: step 4/4. Functionally, catalyzes the decarboxylation of four acetate groups of uroporphyrinogen-III to yield coproporphyrinogen-III. This chain is Uroporphyrinogen decarboxylase, found in Shewanella putrefaciens (strain CN-32 / ATCC BAA-453).